Reading from the N-terminus, the 878-residue chain is Protein translocase subunit SecA (878 aa).

ATP is bound by residues Gln79, Gly97 to Thr101, and Asp487.

This sequence belongs to the SecA family.

Its subcellular location is the plastid. The protein localises to the chloroplast stroma. It localises to the chloroplast thylakoid membrane. It catalyses the reaction ATP + H2O + cellular proteinSide 1 = ADP + phosphate + cellular proteinSide 2.. Functionally, has a central role in coupling the hydrolysis of ATP to the transfer of proteins across the thylakoid membrane. This is Protein translocase subunit SecA from Antithamnion sp. (Red alga).